The following is a 176-amino-acid chain: Salivary antigen 1 (176 aa).

The first 18 residues, 1–18 (MNYCFLVFLVYLVFAVNG), serve as a signal peptide directing secretion.

The protein resides in the secreted. This chain is Salivary antigen 1, found in Ctenocephalides felis (Cat flea).